The chain runs to 216 residues: Large ribosomal subunit protein uL1 (216 aa).

It belongs to the universal ribosomal protein uL1 family.

The chain is Large ribosomal subunit protein uL1 from Oryza sativa subsp. indica (Rice).